A 276-amino-acid polypeptide reads, in one-letter code: 4-deoxy-L-threo-5-hexosulose-uronate ketol-isomerase 1 (276 aa).

H194, H196, E201, and H243 together coordinate Zn(2+).

It belongs to the KduI family. Zn(2+) is required as a cofactor.

It carries out the reaction 5-dehydro-4-deoxy-D-glucuronate = 3-deoxy-D-glycero-2,5-hexodiulosonate. It participates in glycan metabolism; pectin degradation; 2-dehydro-3-deoxy-D-gluconate from pectin: step 4/5. In terms of biological role, catalyzes the isomerization of 5-dehydro-4-deoxy-D-glucuronate to 3-deoxy-D-glycero-2,5-hexodiulosonate. This is 4-deoxy-L-threo-5-hexosulose-uronate ketol-isomerase 1 (kduI1) from Enterococcus faecalis (strain ATCC 700802 / V583).